The following is a 217-amino-acid chain: Cytochrome c biogenesis ATP-binding export protein CcmA (217 aa).

In terms of domain architecture, ABC transporter spans 6-215; sequence FSAKNLACVR…HLDQFAVAEE (210 aa). 38–45 contributes to the ATP binding site; that stretch reads GPNGSGKS.

It belongs to the ABC transporter superfamily. CcmA exporter (TC 3.A.1.107) family. The complex is composed of two ATP-binding proteins (CcmA) and two transmembrane proteins (CcmB).

It is found in the cell inner membrane. It catalyses the reaction heme b(in) + ATP + H2O = heme b(out) + ADP + phosphate + H(+). Functionally, part of the ABC transporter complex CcmAB involved in the biogenesis of c-type cytochromes; once thought to export heme, this seems not to be the case, but its exact role is uncertain. Responsible for energy coupling to the transport system. The sequence is that of Cytochrome c biogenesis ATP-binding export protein CcmA from Paramagnetospirillum magneticum (strain ATCC 700264 / AMB-1) (Magnetospirillum magneticum).